A 431-amino-acid polypeptide reads, in one-letter code: 3-phosphoshikimate 1-carboxyvinyltransferase (431 aa).

3-phosphoshikimate contacts are provided by K22, S23, and R27. K22 contributes to the phosphoenolpyruvate binding site. Positions 94 and 122 each coordinate phosphoenolpyruvate. Residues S167, Q169, D314, and K341 each contribute to the 3-phosphoshikimate site. Q169 provides a ligand contact to phosphoenolpyruvate. Residue D314 is the Proton acceptor of the active site. 2 residues coordinate phosphoenolpyruvate: R345 and R391.

It belongs to the EPSP synthase family. As to quaternary structure, monomer.

It localises to the cytoplasm. It catalyses the reaction 3-phosphoshikimate + phosphoenolpyruvate = 5-O-(1-carboxyvinyl)-3-phosphoshikimate + phosphate. It functions in the pathway metabolic intermediate biosynthesis; chorismate biosynthesis; chorismate from D-erythrose 4-phosphate and phosphoenolpyruvate: step 6/7. Catalyzes the transfer of the enolpyruvyl moiety of phosphoenolpyruvate (PEP) to the 5-hydroxyl of shikimate-3-phosphate (S3P) to produce enolpyruvyl shikimate-3-phosphate and inorganic phosphate. The polypeptide is 3-phosphoshikimate 1-carboxyvinyltransferase (Leuconostoc citreum (strain KM20)).